We begin with the raw amino-acid sequence, 539 residues long: MFCRQCEQTANPCTKLGVCGKQPDTAYLQDLLTYALQGLATYAKEALKESSQTQNVMKRINKFTVEALFATLTNVNFDSEAIKNFIYEAVKLRDELKQMGFKVQETESCKFQPADNLQELVKQGEEANQKIFHSSSNEDVQSLKEITLYSLRGIAAYTDHAQILGQEDEKVYAFIYEALDAMQRNGDLDFWLNMVLRAGEINLRAMELLDAANTGRYGHPVPTPVPLGHKKGKAIVVSGHDLRDLELLLQQTEGKGIYVYTHGEMLPCHGYPELKKYKHFYGHYGTAWQNQQREFAQFPGAILMTTNCIIKPQESYKDRIFTTGVVGWPGVKHIKDKDFTPVIEKALELPGFTEDKEDKTVMVGFARNSVLSVADKVIELVKAGKIRHFFLVGGCDGAKPGRSYYTEFVEKTPKDTIVLTLACGKFRFFDKELGSINGIPRLLDVGQCNDAYSAIQIALALSKAFNVSINELPLSLILSWFEQKAVAILTTLLYLGIKNIRLGPTLPAFVSPNVLKVLVDNFGIKPIKTAEEDLKDILR.

[4Fe-4S] cluster is bound by residues Cys3, Cys6, Cys13, and Cys19. Positions 240, 264, 308, 395, 423, 448, 482, and 484 each coordinate hybrid [4Fe-2O-2S] cluster. Cys395 carries the cysteine persulfide modification.

Belongs to the HCP family. The cofactor is [4Fe-4S] cluster. Hybrid [4Fe-2O-2S] cluster serves as cofactor.

It localises to the cytoplasm. It carries out the reaction A + NH4(+) + H2O = hydroxylamine + AH2 + H(+). Catalyzes the reduction of hydroxylamine to form NH(3) and H(2)O. This Thermodesulfovibrio yellowstonii (strain ATCC 51303 / DSM 11347 / YP87) protein is Hydroxylamine reductase.